We begin with the raw amino-acid sequence, 306 residues long: Agmatinase (306 aa).

His126, Asp149, His151, Asp153, Asp230, and Asp232 together coordinate Mn(2+).

Belongs to the arginase family. Agmatinase subfamily. The cofactor is Mn(2+).

The enzyme catalyses agmatine + H2O = urea + putrescine. The protein operates within amine and polyamine biosynthesis; putrescine biosynthesis via agmatine pathway; putrescine from agmatine: step 1/1. Functionally, catalyzes the formation of putrescine from agmatine. This is Agmatinase from Serratia proteamaculans (strain 568).